The following is a 1021-amino-acid chain: Caspase recruitment domain-containing protein 10 (1021 aa).

Positions 1-24 (MQGRADAGEADEEAGAGSGSEAEE) are disordered. S18 carries the post-translational modification Phosphoserine. One can recognise a CARD domain in the interval 23-115 (EEDALWERIE…EHFTLLTGQE (93 aa)). Residues 138–450 (TEVRRLREAR…LEAQLQRTQG (313 aa)) are a coiled coil. Disordered stretches follow at residues 475-544 (EFPS…MSDI), 597-616 (SPPA…PGLG), and 790-809 (LVRP…QLPA). 2 stretches are compositionally biased toward basic and acidic residues: residues 495–508 (HTSE…KEIN) and 525–535 (RQREEDPEPPK).

CARD10 and BCL10 bind to each other by CARD-CARD interaction. They both participate in a complex with MALT1, where MALT1 binds to BCL10. Interacts with TMEM43; this interaction is essential for EGFR-mediated NF-kappa-B activation. As to expression, highly expressed in kidney, heart followed by brain, lung, liver, skeletal muscle and testis.

Functionally, scaffold protein that plays an important role in mediating the activation of NF-kappa-B via BCL10 or EGFR. The protein is Caspase recruitment domain-containing protein 10 (Card10) of Mus musculus (Mouse).